We begin with the raw amino-acid sequence, 306 residues long: Acetyl-coenzyme A carboxylase carboxyl transferase subunit beta (306 aa).

The CoA carboxyltransferase N-terminal domain occupies 27–296 (LWHKCPSCEA…PEFVAAPVEP (270 aa)). The Zn(2+) site is built by Cys-31, Cys-34, Cys-50, and Cys-53. The C4-type zinc finger occupies 31–53 (CPSCEAVLYRPELEKTLDVCPKC).

Belongs to the AccD/PCCB family. Acetyl-CoA carboxylase is a heterohexamer composed of biotin carboxyl carrier protein (AccB), biotin carboxylase (AccC) and two subunits each of ACCase subunit alpha (AccA) and ACCase subunit beta (AccD). Zn(2+) is required as a cofactor.

The protein localises to the cytoplasm. It catalyses the reaction N(6)-carboxybiotinyl-L-lysyl-[protein] + acetyl-CoA = N(6)-biotinyl-L-lysyl-[protein] + malonyl-CoA. It functions in the pathway lipid metabolism; malonyl-CoA biosynthesis; malonyl-CoA from acetyl-CoA: step 1/1. Functionally, component of the acetyl coenzyme A carboxylase (ACC) complex. Biotin carboxylase (BC) catalyzes the carboxylation of biotin on its carrier protein (BCCP) and then the CO(2) group is transferred by the transcarboxylase to acetyl-CoA to form malonyl-CoA. This Pseudomonas fluorescens (strain ATCC BAA-477 / NRRL B-23932 / Pf-5) protein is Acetyl-coenzyme A carboxylase carboxyl transferase subunit beta.